Consider the following 309-residue polypeptide: 4-hydroxy-3-methylbut-2-enyl diphosphate reductase (309 aa).

[4Fe-4S] cluster is bound at residue Cys12. (2E)-4-hydroxy-3-methylbut-2-enyl diphosphate contacts are provided by His41 and His74. Positions 41 and 74 each coordinate dimethylallyl diphosphate. Positions 41 and 74 each coordinate isopentenyl diphosphate. Position 96 (Cys96) interacts with [4Fe-4S] cluster. Position 124 (His124) interacts with (2E)-4-hydroxy-3-methylbut-2-enyl diphosphate. Position 124 (His124) interacts with dimethylallyl diphosphate. An isopentenyl diphosphate-binding site is contributed by His124. The active-site Proton donor is the Glu126. Thr167 contributes to the (2E)-4-hydroxy-3-methylbut-2-enyl diphosphate binding site. Cys197 contacts [4Fe-4S] cluster. Ser225, Ser226, Asn227, and Ser269 together coordinate (2E)-4-hydroxy-3-methylbut-2-enyl diphosphate. The dimethylallyl diphosphate site is built by Ser225, Ser226, Asn227, and Ser269. Isopentenyl diphosphate contacts are provided by Ser225, Ser226, Asn227, and Ser269.

It belongs to the IspH family. Requires [4Fe-4S] cluster as cofactor.

It catalyses the reaction isopentenyl diphosphate + 2 oxidized [2Fe-2S]-[ferredoxin] + H2O = (2E)-4-hydroxy-3-methylbut-2-enyl diphosphate + 2 reduced [2Fe-2S]-[ferredoxin] + 2 H(+). The catalysed reaction is dimethylallyl diphosphate + 2 oxidized [2Fe-2S]-[ferredoxin] + H2O = (2E)-4-hydroxy-3-methylbut-2-enyl diphosphate + 2 reduced [2Fe-2S]-[ferredoxin] + 2 H(+). It participates in isoprenoid biosynthesis; dimethylallyl diphosphate biosynthesis; dimethylallyl diphosphate from (2E)-4-hydroxy-3-methylbutenyl diphosphate: step 1/1. It functions in the pathway isoprenoid biosynthesis; isopentenyl diphosphate biosynthesis via DXP pathway; isopentenyl diphosphate from 1-deoxy-D-xylulose 5-phosphate: step 6/6. Its function is as follows. Catalyzes the conversion of 1-hydroxy-2-methyl-2-(E)-butenyl 4-diphosphate (HMBPP) into a mixture of isopentenyl diphosphate (IPP) and dimethylallyl diphosphate (DMAPP). Acts in the terminal step of the DOXP/MEP pathway for isoprenoid precursor biosynthesis. In Shewanella halifaxensis (strain HAW-EB4), this protein is 4-hydroxy-3-methylbut-2-enyl diphosphate reductase.